A 63-amino-acid chain; its full sequence is Large ribosomal subunit protein bL35 (63 aa).

Belongs to the bacterial ribosomal protein bL35 family.

This Thermobifida fusca (strain YX) protein is Large ribosomal subunit protein bL35.